The primary structure comprises 301 residues: Methionyl-tRNA formyltransferase (301 aa).

109-112 provides a ligand contact to (6S)-5,6,7,8-tetrahydrofolate; it reads SLLP.

It belongs to the Fmt family.

It carries out the reaction L-methionyl-tRNA(fMet) + (6R)-10-formyltetrahydrofolate = N-formyl-L-methionyl-tRNA(fMet) + (6S)-5,6,7,8-tetrahydrofolate + H(+). Attaches a formyl group to the free amino group of methionyl-tRNA(fMet). The formyl group appears to play a dual role in the initiator identity of N-formylmethionyl-tRNA by promoting its recognition by IF2 and preventing the misappropriation of this tRNA by the elongation apparatus. This is Methionyl-tRNA formyltransferase from Novosphingobium aromaticivorans (strain ATCC 700278 / DSM 12444 / CCUG 56034 / CIP 105152 / NBRC 16084 / F199).